Consider the following 232-residue polypeptide: Large ribosomal subunit protein uL1 (232 aa).

Belongs to the universal ribosomal protein uL1 family. As to quaternary structure, part of the 50S ribosomal subunit.

Binds directly to 23S rRNA. The L1 stalk is quite mobile in the ribosome, and is involved in E site tRNA release. In terms of biological role, protein L1 is also a translational repressor protein, it controls the translation of the L11 operon by binding to its mRNA. The chain is Large ribosomal subunit protein uL1 from Dinoroseobacter shibae (strain DSM 16493 / NCIMB 14021 / DFL 12).